We begin with the raw amino-acid sequence, 606 residues long: Transmembrane 9 superfamily member 1 (606 aa).

A signal peptide spans 1–27; sequence MTVLGYPRSWSCHCLPVLILLLGIGHG. The N-linked (GlcNAc...) asparagine glycan is linked to N178. 4 helical membrane-spanning segments follow: residues 237–257, 310–330, 339–359, and 373–393; these read LSII…AVIL, VLGV…MALL, GAIN…SGYV, and VWNI…TWSV. N401 is a glycosylation site (N-linked (GlcNAc...) asparagine). 4 helical membrane-spanning segments follow: residues 412 to 432, 469 to 489, 499 to 519, and 535 to 555; these read ILLL…IGGI, VGGF…FATV, GILF…SIAL, and SVLS…FYYA. N-linked (GlcNAc...) asparagine glycosylation occurs at N559. Residues 570 to 590 form a helical membrane-spanning segment; sequence FGYSLLTGYVFFLMLGTISFF.

Belongs to the nonaspanin (TM9SF) (TC 9.A.2) family.

Its subcellular location is the lysosome membrane. The protein resides in the cytoplasmic vesicle. The protein localises to the autophagosome membrane. In terms of biological role, plays an essential role in autophagy. The polypeptide is Transmembrane 9 superfamily member 1 (Tm9sf1) (Mus musculus (Mouse)).